A 208-amino-acid polypeptide reads, in one-letter code: FMN-dependent NADH:quinone oxidoreductase 4 (208 aa).

It belongs to the azoreductase type 1 family. In terms of assembly, homodimer. Requires FMN as cofactor.

The enzyme catalyses 2 a quinone + NADH + H(+) = 2 a 1,4-benzosemiquinone + NAD(+). It carries out the reaction N,N-dimethyl-1,4-phenylenediamine + anthranilate + 2 NAD(+) = 2-(4-dimethylaminophenyl)diazenylbenzoate + 2 NADH + 2 H(+). In terms of biological role, quinone reductase that provides resistance to thiol-specific stress caused by electrophilic quinones. Also exhibits azoreductase activity. Catalyzes the reductive cleavage of the azo bond in aromatic azo compounds to the corresponding amines. The chain is FMN-dependent NADH:quinone oxidoreductase 4 from Bacillus cereus (strain ZK / E33L).